The primary structure comprises 1034 residues: Error-prone DNA polymerase (1034 aa).

It belongs to the DNA polymerase type-C family. DnaE2 subfamily.

The protein localises to the cytoplasm. It catalyses the reaction DNA(n) + a 2'-deoxyribonucleoside 5'-triphosphate = DNA(n+1) + diphosphate. DNA polymerase involved in damage-induced mutagenesis and translesion synthesis (TLS). It is not the major replicative DNA polymerase. The protein is Error-prone DNA polymerase of Pseudomonas fluorescens (strain ATCC BAA-477 / NRRL B-23932 / Pf-5).